The primary structure comprises 413 residues: Putative competence-damage inducible protein (413 aa).

The protein belongs to the CinA family.

In Thermoanaerobacter pseudethanolicus (strain ATCC 33223 / 39E) (Clostridium thermohydrosulfuricum), this protein is Putative competence-damage inducible protein.